Consider the following 1909-residue polypeptide: Receptor-type tyrosine-protein phosphatase F (1909 aa).

The N-terminal stretch at 1–31 (MVPNTCTSVPLLPVGLPLLLLLSCIQFSSQA) is a signal peptide. Residues 32–1266 (DSLPNFVRSP…RSVDQPEMLW (1235 aa)) are Extracellular-facing. 3 Ig-like C2-type domains span residues 35-125 (PNFV…AKLT), 137-225 (PTID…ANLY), and 233-315 (PRFS…AQVS). Cys56 and Cys109 are joined by a disulfide. Heparin is bound at residue 68–77 (WMKKGKKVSS). An N-linked (GlcNAc...) asparagine glycan is attached at Asn119. Cys158 and Cys208 are oxidised to a cystine. 2 N-linked (GlcNAc...) asparagine glycosylation sites follow: Asn251 and Asn296. Cys254 and Cys299 are disulfide-bonded. Fibronectin type-III domains lie at 322 to 412 (PPTS…TGEQ), 417 to 511 (PPLH…TQQG), 515 to 604 (QPSS…TAQS), 609 to 706 (PPQD…TNED), 711 to 819 (PPRK…TTGA), 820 to 914 (VPGK…PEDV), 918 to 1013 (FPLN…TSPA), and 1014 to 1098 (FATS…TAPD). Residues 399–418 (GPPSEPVETRTGEQAPSSPP) are disordered. The N-linked (GlcNAc...) asparagine glycan is linked to Asn721. Residues Asn963 and Asn966 are each glycosylated (N-linked (GlcNAc...) asparagine). A helical transmembrane segment spans residues 1267-1287 (VMGPVLAVVLIIIIVIAILLF). Topologically, residues 1288–1909 (KRKRASPLPK…YLGSFDHYAT (622 aa)) are cytoplasmic. 2 Tyrosine-protein phosphatase domains span residues 1354-1609 (FSQE…LLEA) and 1641-1900 (MELE…ALEY). Residues Asp1518, 1550-1556 (CSAGVGR), and Gln1594 each bind substrate. Cys1550 acts as the Phosphocysteine intermediate in catalysis. The active-site Phosphocysteine intermediate is Cys1841.

It belongs to the protein-tyrosine phosphatase family. Receptor class 2A subfamily.

It is found in the membrane. It carries out the reaction O-phospho-L-tyrosyl-[protein] + H2O = L-tyrosyl-[protein] + phosphate. Its function is as follows. Possible cell adhesion receptor. It possesses an intrinsic protein tyrosine phosphatase activity (PTPase). The first PTPase domain has enzymatic activity, while the second one seems to affect the substrate specificity of the first one. This Danio rerio (Zebrafish) protein is Receptor-type tyrosine-protein phosphatase F (ptprf).